Reading from the N-terminus, the 382-residue chain is Pyrimidine monooxygenase RutA (382 aa).

Residues 68 to 69 (IK), asparagine 134, glutamate 143, 159 to 160 (RY), and serine 209 each bind FMN.

This sequence belongs to the NtaA/SnaA/DszA monooxygenase family. RutA subfamily.

The enzyme catalyses uracil + FMNH2 + NADH + O2 = (Z)-3-ureidoacrylate + FMN + NAD(+) + H2O + H(+). The catalysed reaction is thymine + FMNH2 + NADH + O2 = (Z)-2-methylureidoacrylate + FMN + NAD(+) + H2O + H(+). Functionally, catalyzes the pyrimidine ring opening between N-3 and C-4 by an unusual flavin hydroperoxide-catalyzed mechanism, adding oxygen atoms in the process to yield ureidoacrylate peracid, that immediately reacts with FMN forming ureidoacrylate and FMN-N(5)-oxide. The FMN-N(5)-oxide reacts spontaneously with NADH to produce FMN. Requires the flavin reductase RutF to regenerate FMN in vivo. This is Pyrimidine monooxygenase RutA from Shigella flexneri serotype X (strain 2002017).